The chain runs to 193 residues: Coiled-coil domain-containing protein 184 (193 aa).

The stretch at 39-68 forms a coiled coil; that stretch reads GMKELMEHLKAQLQALFEDVRAMRGALDEQ. Residues 101-176 form a disordered region; the sequence is GLGVAGGKGS…LGENGPLVEP (76 aa). A compositionally biased stretch (acidic residues) spans 135-146; sequence PDEEDEEEEEEK.

In Rattus norvegicus (Rat), this protein is Coiled-coil domain-containing protein 184 (Ccdc184).